A 338-amino-acid chain; its full sequence is Ketol-acid reductoisomerase (NADP(+)) (338 aa).

In terms of domain architecture, KARI N-terminal Rossmann spans 1-181 (MKVFYDKDAD…GGGRAGIIET (181 aa)). Residues 24–27 (YGSQ), Arg47, and Ser52 contribute to the NADP(+) site. The active site involves His107. Residue Gly133 participates in NADP(+) binding. One can recognise a KARI C-terminal knotted domain in the interval 182–327 (NFREETETDL…AKLRSMMPWI (146 aa)). Mg(2+) is bound by residues Asp190, Glu194, Glu226, and Glu230. Residue Ser251 coordinates substrate.

It belongs to the ketol-acid reductoisomerase family. It depends on Mg(2+) as a cofactor.

The enzyme catalyses (2R)-2,3-dihydroxy-3-methylbutanoate + NADP(+) = (2S)-2-acetolactate + NADPH + H(+). It carries out the reaction (2R,3R)-2,3-dihydroxy-3-methylpentanoate + NADP(+) = (S)-2-ethyl-2-hydroxy-3-oxobutanoate + NADPH + H(+). It functions in the pathway amino-acid biosynthesis; L-isoleucine biosynthesis; L-isoleucine from 2-oxobutanoate: step 2/4. The protein operates within amino-acid biosynthesis; L-valine biosynthesis; L-valine from pyruvate: step 2/4. In terms of biological role, involved in the biosynthesis of branched-chain amino acids (BCAA). Catalyzes an alkyl-migration followed by a ketol-acid reduction of (S)-2-acetolactate (S2AL) to yield (R)-2,3-dihydroxy-isovalerate. In the isomerase reaction, S2AL is rearranged via a Mg-dependent methyl migration to produce 3-hydroxy-3-methyl-2-ketobutyrate (HMKB). In the reductase reaction, this 2-ketoacid undergoes a metal-dependent reduction by NADPH to yield (R)-2,3-dihydroxy-isovalerate. The polypeptide is Ketol-acid reductoisomerase (NADP(+)) (Paraburkholderia phytofirmans (strain DSM 17436 / LMG 22146 / PsJN) (Burkholderia phytofirmans)).